We begin with the raw amino-acid sequence, 512 residues long: MADQLIIFDTTLRDGEQSPGASMNKDEKLRIARQLERLKVDVIEAGFAASSNGDFEAVQGIARAIKDSTICSLSRANDRDISRAAEALKGANRSRIHTFIATSALHMEKKLRMTPDQVFEQAKLAVRFARNLVADVEFSPEDAYRSDEDFLCRVIEAAINEGATTINVPDTVGYAIPELYGTFIKTLRERVPNSDKAIWSVHCHNDLGMAVANSLAGVKIGGARQVECTINGLGERAGNCSLEEVVMAVKTRRDYFGLDVDIETQHILAASRMVSQITGFVVQPNKAIVGANAFAHAAGIHQDGVLKARDTYEIMRAEDVGWSANKIVLSKVSGRNAFKQRLQDLGAQMESESDVNAAFARFKELADRKSEIFDEDILALVGSESVAREKEQYSFVSLSQHSETGERPQASIVFTADGKEVKSSSDGDGPVDASLKAIEAQVKSGAEMVLYSVNAISGSTESQGEVTVRLQHGGRVVNGVGADPDIIVASAKAYLSALSKLHSKADRVAAQG.

The region spanning 5–268 (LIIFDTTLRD…DVDIETQHIL (264 aa)) is the Pyruvate carboxyltransferase domain. The Mn(2+) site is built by aspartate 14, histidine 202, histidine 204, and asparagine 239. The interval 394–512 (SFVSLSQHSE…SKADRVAAQG (119 aa)) is regulatory domain.

The protein belongs to the alpha-IPM synthase/homocitrate synthase family. LeuA type 1 subfamily. As to quaternary structure, homodimer. The cofactor is Mn(2+).

Its subcellular location is the cytoplasm. It catalyses the reaction 3-methyl-2-oxobutanoate + acetyl-CoA + H2O = (2S)-2-isopropylmalate + CoA + H(+). It functions in the pathway amino-acid biosynthesis; L-leucine biosynthesis; L-leucine from 3-methyl-2-oxobutanoate: step 1/4. Functionally, catalyzes the condensation of the acetyl group of acetyl-CoA with 3-methyl-2-oxobutanoate (2-ketoisovalerate) to form 3-carboxy-3-hydroxy-4-methylpentanoate (2-isopropylmalate). The sequence is that of 2-isopropylmalate synthase from Albidiferax ferrireducens (strain ATCC BAA-621 / DSM 15236 / T118) (Rhodoferax ferrireducens).